We begin with the raw amino-acid sequence, 452 residues long: tRNA-2-methylthio-N(6)-dimethylallyladenosine synthase (452 aa).

Residues 5–121 form the MTTase N-terminal domain; the sequence is RRYHITTFGC…LADLLAQVEA (117 aa). Positions 14, 50, 84, 156, 160, and 163 each coordinate [4Fe-4S] cluster. A Radical SAM core domain is found at 142-379; it reads RDSTITAWVN…NHLVAQMAAD (238 aa). The 65-residue stretch at 382–446 folds into the TRAM domain; that stretch reads QRYLGRTEEV…AFSLTGQILS (65 aa).

The protein belongs to the methylthiotransferase family. MiaB subfamily. Monomer. It depends on [4Fe-4S] cluster as a cofactor.

It is found in the cytoplasm. The catalysed reaction is N(6)-dimethylallyladenosine(37) in tRNA + (sulfur carrier)-SH + AH2 + 2 S-adenosyl-L-methionine = 2-methylsulfanyl-N(6)-dimethylallyladenosine(37) in tRNA + (sulfur carrier)-H + 5'-deoxyadenosine + L-methionine + A + S-adenosyl-L-homocysteine + 2 H(+). Catalyzes the methylthiolation of N6-(dimethylallyl)adenosine (i(6)A), leading to the formation of 2-methylthio-N6-(dimethylallyl)adenosine (ms(2)i(6)A) at position 37 in tRNAs that read codons beginning with uridine. This chain is tRNA-2-methylthio-N(6)-dimethylallyladenosine synthase, found in Synechococcus elongatus (strain ATCC 33912 / PCC 7942 / FACHB-805) (Anacystis nidulans R2).